Reading from the N-terminus, the 552-residue chain is Phosphoglucomutase (552 aa).

Catalysis depends on Ser143, which acts as the Phosphoserine intermediate. Positions 143, 295, 297, and 299 each coordinate Mg(2+).

This sequence belongs to the phosphohexose mutase family. The cofactor is Mg(2+).

It catalyses the reaction alpha-D-glucose 1-phosphate = alpha-D-glucose 6-phosphate. It participates in glycolipid metabolism; diglucosyl-diacylglycerol biosynthesis. In terms of biological role, catalyzes the interconversion between glucose-6-phosphate and alpha-glucose-1-phosphate. This is the first step in the biosynthesis of diglucosyl-diacylglycerol (Glc2-DAG), i.e. the predominant glycolipid found in the S.aureus membrane, which is also used as a membrane anchor for lipoteichoic acid (LTA). This is Phosphoglucomutase (pgcA) from Staphylococcus aureus (strain USA300).